A 598-amino-acid polypeptide reads, in one-letter code: Beta-hexosaminidase A (598 aa).

The signal sequence occupies residues 1-11 (MSFITSAHATA). Residue Asp305 is part of the active site.

It belongs to the glycosyl hydrolase 3 family.

The catalysed reaction is Hydrolysis of terminal non-reducing N-acetyl-D-hexosamine residues in N-acetyl-beta-D-hexosaminides.. Its function is as follows. Most active towards p-nitrophenyl-N-acetyl-beta-D-glucosaminide(PNP-beta-GlcNAc) and diacetylchitobiose. This is Beta-hexosaminidase A (cht60) from Pseudoalteromonas piscicida.